The primary structure comprises 167 residues: MKRKAIYPGTFDPFTNGHLDVLDRALNIFDEVEVVIGENSQKKTLFTVNERLEMIREIVIEFPGVTVAVLHDGLLANYARQVEARAIVRGVRQVKDFEYEFQMSLLNRHLYPEVTTVFLMPNVKYTYVASSIIREVAMLGGDVSKFVHPCVLAMLHKKLQENKKSNS.

Thr-10 lines the substrate pocket. Residues 10–11 (TF) and His-18 each bind ATP. Substrate contacts are provided by Lys-42, Leu-75, and Arg-89. ATP is bound by residues 90–92 (GVR), Glu-100, and 125–131 (YTYVASS).

The protein belongs to the bacterial CoaD family. As to quaternary structure, homohexamer. The cofactor is Mg(2+).

The protein resides in the cytoplasm. It carries out the reaction (R)-4'-phosphopantetheine + ATP + H(+) = 3'-dephospho-CoA + diphosphate. It participates in cofactor biosynthesis; coenzyme A biosynthesis; CoA from (R)-pantothenate: step 4/5. In terms of biological role, reversibly transfers an adenylyl group from ATP to 4'-phosphopantetheine, yielding dephospho-CoA (dPCoA) and pyrophosphate. This chain is Phosphopantetheine adenylyltransferase, found in Chlorobium phaeobacteroides (strain DSM 266 / SMG 266 / 2430).